A 273-amino-acid polypeptide reads, in one-letter code: 4-hydroxy-tetrahydrodipicolinate reductase (273 aa).

NAD(+)-binding positions include 11 to 16 (GATGKM) and 106 to 108 (GTT). His162 functions as the Proton donor/acceptor in the catalytic mechanism. Residue His163 coordinates (S)-2,3,4,5-tetrahydrodipicolinate. The Proton donor role is filled by Lys166. 172–173 (GT) contacts (S)-2,3,4,5-tetrahydrodipicolinate.

This sequence belongs to the DapB family.

The protein localises to the cytoplasm. It catalyses the reaction (S)-2,3,4,5-tetrahydrodipicolinate + NAD(+) + H2O = (2S,4S)-4-hydroxy-2,3,4,5-tetrahydrodipicolinate + NADH + H(+). It carries out the reaction (S)-2,3,4,5-tetrahydrodipicolinate + NADP(+) + H2O = (2S,4S)-4-hydroxy-2,3,4,5-tetrahydrodipicolinate + NADPH + H(+). It participates in amino-acid biosynthesis; L-lysine biosynthesis via DAP pathway; (S)-tetrahydrodipicolinate from L-aspartate: step 4/4. Functionally, catalyzes the conversion of 4-hydroxy-tetrahydrodipicolinate (HTPA) to tetrahydrodipicolinate. The polypeptide is 4-hydroxy-tetrahydrodipicolinate reductase (Synechococcus elongatus (strain ATCC 33912 / PCC 7942 / FACHB-805) (Anacystis nidulans R2)).